Reading from the N-terminus, the 155-residue chain is DNA gyrase inhibitor (155 aa).

It belongs to the DNA gyrase inhibitor family. Interacts with DNA gyrase.

Its subcellular location is the cytoplasm. Inhibits the supercoiling activity of DNA gyrase. Acts by inhibiting DNA gyrase at an early step, prior to (or at the step of) binding of DNA by the gyrase. It protects cells against toxins that target DNA gyrase, by inhibiting activity of these toxins and reducing the formation of lethal double-strand breaks in the cell. The polypeptide is DNA gyrase inhibitor (Citrobacter koseri (strain ATCC BAA-895 / CDC 4225-83 / SGSC4696)).